The primary structure comprises 33 residues: MSDIN-like toxin proprotein 5 (33 aa).

Positions 1–10 (MSDINATRLP) are excised as a propeptide. A cross-link (cyclopeptide (Ile-Pro)) is located at residues 11–18 (IFWFIYFP). Residues 19-32 (CVGDNVDNTLTRGE) constitute a propeptide that is removed on maturation.

This sequence belongs to the MSDIN fungal toxin family. Processed by the macrocyclase-peptidase enzyme POPB to yield a toxic cyclic octapeptide. POPB first removes 10 residues from the N-terminus. Conformational trapping of the remaining peptide forces the enzyme to release this intermediate rather than proceed to macrocyclization. The enzyme rebinds the remaining peptide in a different conformation and catalyzes macrocyclization of the N-terminal 8 residues.

Functionally, probable toxin that belongs to the MSDIN-like toxin family responsible for a large number of food poisoning cases and deaths. In Amanita phalloides (Death cap), this protein is MSDIN-like toxin proprotein 5.